A 221-amino-acid polypeptide reads, in one-letter code: Very-long-chain (3R)-3-hydroxyacyl-CoA dehydratase PASTICCINO 2 (221 aa).

Residues 1–11 (MAGFLSVVRRV) are Cytoplasmic-facing. Residues 12-32 (YLTLYNWIVFAGWAQVLYLAI) traverse the membrane as a helical segment. The Lumenal portion of the chain corresponds to 33-51 (TTLKETGYENVYDAIEKPL). Residues 52-70 (QLAQTAAVLEILHGLVGLV) form a helical membrane-spanning segment. Residues 71–76 (RSPVSA) are Cytoplasmic-facing. A helical transmembrane segment spans residues 77–95 (TLPQIGSRLFLTWGILYSF). The Lumenal portion of the chain corresponds to 96–100 (PEVRS). Residues 101-122 (HFLVTSLVISWSITEIIRYSFF) form a helical membrane-spanning segment. The Cytoplasmic segment spans residues 123–142 (GFKEALGFAPSWHLWLRYSS). A helical transmembrane segment spans residues 143-165 (FLLLYPTGITSEVGLIYLALPHI). Residues Y147 and E154 contribute to the active site. The Lumenal portion of the chain corresponds to 166 to 184 (KTSEMYSVRMPNILNFSFD). The helical transmembrane segment at 185–204 (FFYATILVLAIYVPGSPHMY) threads the bilayer. Residues 205 to 221 (RYMLGQRKRALSKSKRE) are Cytoplasmic-facing.

It belongs to the very long-chain fatty acids dehydratase HACD family. As to quaternary structure, interacts with CDKA-1; but only with the 'Tyr-15' phosphorylated protein. Interacts with PAS1. Part of the fatty acid elongase complex which contains a beta-ketoacyl-CoA synthase (KCS), a beta-ketoacyl-CoA reductase (KCR), a beta-hydroxyacyl-CoA dehydratase (HCD) and an enoyl-CoA reductase (ECR). In terms of tissue distribution, high expression in young seedlings, roots, root tips, flowers and young siliques. Lower levels in leaves and stems.

The protein resides in the endoplasmic reticulum membrane. It is found in the cytoplasm. It localises to the nucleus. The enzyme catalyses a very-long-chain (3R)-3-hydroxyacyl-CoA = a very-long-chain (2E)-enoyl-CoA + H2O. It participates in lipid metabolism; fatty acid biosynthesis. In terms of biological role, catalyzes the third of the four reactions of the long-chain fatty acids elongation cycle. This endoplasmic reticulum-bound enzymatic process, allows the addition of two carbons to the chain of long- and very long-chain fatty acids/VLCFAs per cycle. This enzyme catalyzes the dehydration of the 3-hydroxyacyl-CoA intermediate into trans-2,3-enoyl-CoA, within each cycle of fatty acid elongation. Thereby, it participates in the production of VLCFAs of different chain lengths that are involved in multiple biological processes as precursors of membrane lipids and lipid mediators. May be an anti-phosphatase that prevents CDKA-1 dephosphorylation and activation. Involved in the hormonal control of cell division and differentiation. Required for proliferation control of meristematic and non-meristematic cells. Negative regulator of the cell cycle. This chain is Very-long-chain (3R)-3-hydroxyacyl-CoA dehydratase PASTICCINO 2 (PAS2), found in Arabidopsis thaliana (Mouse-ear cress).